The chain runs to 668 residues: Potassium voltage-gated channel subfamily KQT member 1 (668 aa).

At 1–119 (MDTASSPPSA…YNFLERPTGW (119 aa)) the chain is on the cytoplasmic side. A Phosphoserine; by PKA modification is found at S27. Residues 120-141 (KCFVYHFTVFLIVLVCLIFSVL) traverse the membrane as a helical segment. Over 142 to 152 (STIEQYAALAT) the chain is Extracellular. A helical transmembrane segment spans residues 153–175 (GTLFWMEIVLVVFFGTEYVVRLW). Residues 176 to 191 (SAGCRSKYVGIWGRLR) are Cytoplasmic-facing. The chain crosses the membrane as a helical span at residues 192-217 (FARKPISIIDLIVVVASMVVLCVGSK). At 218 to 225 (GQVFATSA) the chain is on the extracellular side. Residues 226 to 241 (IRGIRFLQILRMLHVD) form a helical; Voltage-sensor membrane-spanning segment. An interaction with KCNE3 region spans residues 237–245 (MLHVDRQGG). Residues 242-259 (RQGGTWRLLGSVVFIHRQ) are Cytoplasmic-facing. Q243 is a binding site for a 1,2-diacyl-sn-glycero-3-phospho-(1D-myo-inositol-4,5-bisphosphate). A helical membrane pass occupies residues 260–282 (ELITTLYIGFLGLIFSSYFVYLA). The Extracellular segment spans residues 283-298 (EKDAVNESGRIEFGSY). N288 carries N-linked (GlcNAc...) asparagine glycosylation. Positions 299-319 (ADALWWGVVTVTTIGYGDKVP) form an intramembrane region, pore-forming. At 320–321 (QT) the chain is on the extracellular side. The chain crosses the membrane as a helical span at residues 322–347 (WVGKTIASCFSVFAISFFALPAGILG). Over 348 to 668 (SGFALKVQQK…VPQTGPDEGS (321 aa)) the chain is Cytoplasmic. The tract at residues 369–381 (AAASLIQTAWRCY) is interaction with CALM. Residues S406 and S408 each carry the phosphoserine modification. The interaction with CALM; calcium-dependent stretch occupies residues 514 to 528 (KVIRRMQYFVAKKKF). The tract at residues 534 to 571 (PYDVRDVIEQYSQGHLNLMVRIKELQRRLDQSIGKPSL) is interaction with KCNE1 C-terminus. Positions 584-620 (SNTIGARLNRVEDKVTQLDQRLVIITDMLHQLLSMQQ) form a coiled coil. The tract at residues 587 to 615 (IGARLNRVEDKVTQLDQRLVIITDMLHQL) is interaction with AKAP9. Positions 588–619 (GARLNRVEDKVTQLDQRLVIITDMLHQLLSMQ) are C-terminal assembly domain (tetramerization).

Belongs to the potassium channel family. KQT (TC 1.A.1.15) subfamily. Kv7.1/KCNQ1 sub-subfamily. In terms of assembly, tetramer. Heterotetramer with KCNE1; form the native cardiac channel I(Ks) which increases the amplitude and slows down the activation kinetics of outward potassium current and targets to the membrane raft. Interacts (via C-terminus) with CALM; forms a heterooctameric structure (with 4:4 KCNQ1:CALM stoichiometry) in a calcium-independent manner. Interacts with AKAP9; targets protein kinase A (PKA) catalytic and regulatory subunits and protein phosphatase 1 (PP1) to the KCNQ1-KCNE1 complex, allowing PKA-mediated phosphorylation and increase of delayed rectifier potassium channel activity. Interacts with KCNE2; form an heterooligomer complex that targets to the membrane raft and leading to currents with an apparently instantaneous activation, a rapid deactivation process and a linear current-voltage relationship and decreases the amplitude of the outward current. Interacts with AP2M1; mediates estrogen-induced internalization via clathrin-coated vesicles. Interacts with NEDD4L; promotes internalization and decreases I(Ks) currents. Interacts with USP2; counteracts the NEDD4L-specific down-regulation of I(Ks) and restore plasma membrane localization. Heterotetramer with KCNQ5; has a voltage-gated potassium channel activity. Interacts with KCNE3; four KCNE3 molecules are bound to one KCNQ1 tetramer (4:4 KCNQ1:KCNE3 stoichiometry); alters membrane raft localization; affects KCNQ1 structure and gating properties. Interacts with KCNE4; impairs KCNQ1 localization in lipid rafts and inhibits voltage-gated potassium channel activity. Interacts with KCNE5; impairs KCNQ1 localization in lipid rafts and only conducts current upon strong and continued depolarization. Interacts with SLC5A3; forms coregulatory channel-transporter complexes that modulate Na(+)-coupled myo-inositol influx through the transporter. Post-translationally, phosphorylation at Ser-27 by PKA; increases delayed rectifier potassium channel activity of the KCNQ1-KCNE1 complex through a macromolecular complex that includes PKA, PP1, and the targeting protein AKAP9. Ubiquitinated by NEDD4L; promotes internalization. The ubiquitinylated form is internalized through a clathrin-mediated endocytosis by interacting with AP2M1 and is recycled back to the cell membrane via RAB4A and RAB11A. In terms of processing, deubiquitinated by USP2; counteracts the NEDD4L-specific down-regulation of I(Ks) and restores the membrane localization. Expressed in heart, kidney and salivary glands. Detected in the cochlea. Almost undetectable in brain, skeletal muscle and liver. Widely expressed in embryonic and neonatal tissues. Expressed in choroid plexus epithelium (at protein level).

Its subcellular location is the cell membrane. It is found in the cytoplasmic vesicle membrane. It localises to the early endosome. The protein resides in the membrane raft. The protein localises to the endoplasmic reticulum. Its subcellular location is the basolateral cell membrane. It is found in the apical cell membrane. It catalyses the reaction K(+)(in) = K(+)(out). PIP2 molecule is essential to activate KCNQ channels by inducing the coupling of the voltage-sensing domain (VSD) and the pore-forming domain (PD). Upon channel activation, PIP2 disrupts the VSD-calmodulin/CALM interactions, causing the release of CALM from the VSD which triggers the opening of the gate. Calcium potentiates KCNQ1 channel current through calcium-bound CALM. Calcium-bound CALM competes with PIP2 to stabilize the channel open state. In terms of biological role, pore-forming subunit of the voltage-gated potassium (Kv) channel involved in the regulation of cardiomyocyte excitability and important in normal development and functions of myocardium, inner ear, stomach and colon. Associates with KCNE beta subunits that modulates current kinetics. Induces a voltage-dependent by rapidly activating and slowly deactivating potassium-selective outward current. Also promotes a delayed voltage activated potassium current showing outward rectification characteristic. During beta-adrenergic receptor stimulation participates in cardiac increases the amplitude and slows down the activation kinetics of outward potassium current I(Ks). Muscarinic agonist oxotremorine-M strongly suppresses KCNQ1/KCNE1 current. When associated with KCNE3, forms the potassium channel that is important for cyclic AMP-stimulated intestinal secretion of chloride ions. This interaction with KCNE3 is reduced by 17beta-estradiol, resulting in the reduction of currents. During conditions of increased substrate load, maintains the driving force for proximal tubular and intestinal sodium ions absorption, gastric acid secretion, and cAMP-induced jejunal chloride ions secretion. Allows the provision of potassium ions to the luminal membrane of the secretory canaliculus in the resting state as well as during stimulated acid secretion. When associated with KCNE2, forms a heterooligomer complex leading to currents with an apparently instantaneous activation, a rapid deactivation process and a linear current-voltage relationship and decreases the amplitude of the outward current. When associated with KCNE4, inhibits voltage-gated potassium channel activity. When associated with KCNE5, this complex only conducts current upon strong and continued depolarization. Also forms a heterotetramer with KCNQ5; has a voltage-gated potassium channel activity. Binds with phosphatidylinositol 4,5-bisphosphate. KCNQ1-KCNE2 channel associates with Na(+)-coupled myo-inositol symporter in the apical membrane of choroid plexus epithelium and regulates the myo-inositol gradient between blood and cerebrospinal fluid with an impact on neuron excitability. The polypeptide is Potassium voltage-gated channel subfamily KQT member 1 (Mus musculus (Mouse)).